A 129-amino-acid polypeptide reads, in one-letter code: Sulfurtransferase TusD (129 aa).

Cysteine 79 functions as the Cysteine persulfide intermediate in the catalytic mechanism.

Belongs to the DsrE/TusD family. In terms of assembly, heterohexamer, formed by a dimer of trimers. The hexameric TusBCD complex contains 2 copies each of TusB, TusC and TusD. The TusBCD complex interacts with TusE.

It is found in the cytoplasm. Part of a sulfur-relay system required for 2-thiolation of 5-methylaminomethyl-2-thiouridine (mnm(5)s(2)U) at tRNA wobble positions. Accepts sulfur from TusA and transfers it in turn to TusE. This chain is Sulfurtransferase TusD, found in Serratia proteamaculans (strain 568).